The chain runs to 181 residues: Oligoribonuclease (181 aa).

Residues 8 to 171 enclose the Exonuclease domain; it reads LIWIDLEMTG…DDIRESVAEL (164 aa). The active site involves Tyr-129.

This sequence belongs to the oligoribonuclease family.

Its subcellular location is the cytoplasm. 3'-to-5' exoribonuclease specific for small oligoribonucleotides. This chain is Oligoribonuclease, found in Photorhabdus laumondii subsp. laumondii (strain DSM 15139 / CIP 105565 / TT01) (Photorhabdus luminescens subsp. laumondii).